The chain runs to 264 residues: MVKPLPRLRLQGFNNLTKALSFNIYDVCYARTEEERQRYIEYIDEQYDADRLTQILTDVAEIIGANILNIARQDYDPQGASVTILISEEPVIDKKQAGRELISDAVVAHMDKSHITVHTYPETHPQEGIATFRADIDVATCGVISPLKALNYLIETLESDIVIMDYRVRGFTRDVKGKKHYIDHKINSIQHFLAKNVKSRYEMIDVNVYQENIFHTKMHLKDFDLDQYLFEERAKNLSFKERMKIETLLKREIEELFHGRNLSE.

Ser-113 (schiff-base intermediate with substrate; via pyruvic acid) is an active-site residue. Ser-113 is modified (pyruvic acid (Ser); by autocatalysis). Catalysis depends on His-118, which acts as the Proton acceptor; for processing activity. The active-site Proton donor; for catalytic activity is Cys-141.

It belongs to the prokaryotic AdoMetDC family. Type 2 subfamily. As to quaternary structure, heterooctamer of four alpha and four beta chains arranged as a tetramer of alpha/beta heterodimers. It depends on pyruvate as a cofactor. Is synthesized initially as an inactive proenzyme. Formation of the active enzyme involves a self-maturation process in which the active site pyruvoyl group is generated from an internal serine residue via an autocatalytic post-translational modification. Two non-identical subunits are generated from the proenzyme in this reaction, and the pyruvate is formed at the N-terminus of the alpha chain, which is derived from the carboxyl end of the proenzyme. The post-translation cleavage follows an unusual pathway, termed non-hydrolytic serinolysis, in which the side chain hydroxyl group of the serine supplies its oxygen atom to form the C-terminus of the beta chain, while the remainder of the serine residue undergoes an oxidative deamination to produce ammonia and the pyruvoyl group blocking the N-terminus of the alpha chain.

The enzyme catalyses S-adenosyl-L-methionine + H(+) = S-adenosyl 3-(methylsulfanyl)propylamine + CO2. It functions in the pathway amine and polyamine biosynthesis; S-adenosylmethioninamine biosynthesis; S-adenosylmethioninamine from S-adenosyl-L-methionine: step 1/1. Catalyzes the decarboxylation of S-adenosylmethionine to S-adenosylmethioninamine (dcAdoMet), the propylamine donor required for the synthesis of the polyamines spermine and spermidine from the diamine putrescine. This Xanthomonas oryzae pv. oryzae (strain MAFF 311018) protein is S-adenosylmethionine decarboxylase proenzyme.